We begin with the raw amino-acid sequence, 295 residues long: Aspartate carbamoyltransferase catalytic subunit (295 aa).

Positions 54 and 55 each coordinate carbamoyl phosphate. K82 serves as a coordination point for L-aspartate. R104, H132, and Q135 together coordinate carbamoyl phosphate. Residues R165 and R218 each contribute to the L-aspartate site. 2 residues coordinate carbamoyl phosphate: G257 and P258.

This sequence belongs to the aspartate/ornithine carbamoyltransferase superfamily. ATCase family. In terms of assembly, heterododecamer (2C3:3R2) of six catalytic PyrB chains organized as two trimers (C3), and six regulatory PyrI chains organized as three dimers (R2).

It catalyses the reaction carbamoyl phosphate + L-aspartate = N-carbamoyl-L-aspartate + phosphate + H(+). The protein operates within pyrimidine metabolism; UMP biosynthesis via de novo pathway; (S)-dihydroorotate from bicarbonate: step 2/3. Its function is as follows. Catalyzes the condensation of carbamoyl phosphate and aspartate to form carbamoyl aspartate and inorganic phosphate, the committed step in the de novo pyrimidine nucleotide biosynthesis pathway. The polypeptide is Aspartate carbamoyltransferase catalytic subunit (Wolbachia pipientis subsp. Culex pipiens (strain wPip)).